The chain runs to 319 residues: MIDLSPLVRRLAGTPLAAWADSLPAELDERLTRSHGDLQRWKAALQALPALTAERIELNGRVSLSGTCHEETRAALRQALLGLSPWRKGPFELFGVLVDTEWRSDWKWQRVAPHLDLRGRRILDVGCGNGYYMWRMLGAGADCVIGIDPNWLFFCQFLALRHYLPELPAWHLPLALEDLPEKLEGFDTVFSMGVLYHRRSPIDHLLALKDCLRPGGELLLETLVVDGDVGTVLVPEDRYAQMRNVWFLPSVAALELWLRRAGFVEVRCVDVAVTSVEEQRATEWMTFQSLPDFLDPTDRGKTVEGLPAPTRAVLLARKP.

Carboxy-S-adenosyl-L-methionine contacts are provided by residues Lys88, Trp102, Lys107, Gly126, 176 to 177, Met192, Tyr196, and Arg311; that span reads LE.

It belongs to the class I-like SAM-binding methyltransferase superfamily. CmoB family. In terms of assembly, homotetramer.

It carries out the reaction carboxy-S-adenosyl-L-methionine + 5-hydroxyuridine(34) in tRNA = 5-carboxymethoxyuridine(34) in tRNA + S-adenosyl-L-homocysteine + H(+). In terms of biological role, catalyzes carboxymethyl transfer from carboxy-S-adenosyl-L-methionine (Cx-SAM) to 5-hydroxyuridine (ho5U) to form 5-carboxymethoxyuridine (cmo5U) at position 34 in tRNAs. The polypeptide is tRNA U34 carboxymethyltransferase (Azotobacter vinelandii (strain DJ / ATCC BAA-1303)).